The sequence spans 325 residues: Tagatose 1,6-diphosphate aldolase 1 (325 aa).

Belongs to the aldolase LacD family.

It catalyses the reaction D-tagatofuranose 1,6-bisphosphate = D-glyceraldehyde 3-phosphate + dihydroxyacetone phosphate. The protein operates within carbohydrate metabolism; D-tagatose 6-phosphate degradation; D-glyceraldehyde 3-phosphate and glycerone phosphate from D-tagatose 6-phosphate: step 2/2. This is Tagatose 1,6-diphosphate aldolase 1 (lacD1) from Streptococcus pyogenes serotype M1.